The sequence spans 142 residues: Clock-controlled protein 6 (142 aa).

This sequence belongs to the SED1 family.

The chain is Clock-controlled protein 6 (ccg-6) from Neurospora crassa (strain ATCC 24698 / 74-OR23-1A / CBS 708.71 / DSM 1257 / FGSC 987).